A 245-amino-acid chain; its full sequence is Thiopurine S-methyltransferase (245 aa).

Phosphoserine is present on Ser-14. 29–40 (WQDKWVNGKTAF) contributes to the S-adenosyl-L-methionine binding site. Phe-40 serves as a coordination point for substrate. Residue Lys-58 is modified to N6-acetyllysine. Residues Leu-69, Glu-90, 134–135 (SI), and Arg-152 each bind S-adenosyl-L-methionine.

It belongs to the class I-like SAM-binding methyltransferase superfamily. TPMT family. In terms of assembly, monomer.

The protein resides in the cytoplasm. It catalyses the reaction S-adenosyl-L-methionine + a thiopurine = S-adenosyl-L-homocysteine + a thiopurine S-methylether.. The catalysed reaction is mercaptopurine + S-adenosyl-L-methionine = 6-methylthiopurine + S-adenosyl-L-homocysteine + H(+). It carries out the reaction 6-thioguanine + S-adenosyl-L-methionine = 6-methylthioguanine + S-adenosyl-L-homocysteine + H(+). Its activity is regulated as follows. Inhibited by S-adenosyl-L-homocysteine (SAH). Catalyzes the S-methylation of thiopurine drugs such as 6-mercaptopurine (also called mercaptopurine, 6-MP or its brand name Purinethol) and 6-thioguanine (also called tioguanine or 6-TG) using S-adenosyl-L-methionine as the methyl donor. TPMT activity modulates the cytotoxic effects of thiopurine prodrugs. A natural substrate for this enzyme has yet to be identified. This Homo sapiens (Human) protein is Thiopurine S-methyltransferase (TPMT).